The sequence spans 393 residues: 5-amino-6-(D-ribitylamino)uracil--L-tyrosine 4-hydroxyphenyl transferase (393 aa).

The Radical SAM core domain occupies Val-71–Asn-318. [4Fe-4S] cluster is bound by residues Cys-85, Cys-89, and Cys-92.

It belongs to the radical SAM superfamily. CofH family. In terms of assembly, consists of two subunits, CofG and CofH. Requires [4Fe-4S] cluster as cofactor.

The catalysed reaction is 5-amino-6-(D-ribitylamino)uracil + L-tyrosine + S-adenosyl-L-methionine = 5-amino-5-(4-hydroxybenzyl)-6-(D-ribitylimino)-5,6-dihydrouracil + 2-iminoacetate + 5'-deoxyadenosine + L-methionine + H(+). It functions in the pathway cofactor biosynthesis; coenzyme F0 biosynthesis. Catalyzes the radical-mediated synthesis of 5-amino-5-(4-hydroxybenzyl)-6-(D-ribitylimino)-5,6-dihydrouracil from 5-amino-6-(D-ribitylamino)uracil and L-tyrosine. In Trichodesmium erythraeum (strain IMS101), this protein is 5-amino-6-(D-ribitylamino)uracil--L-tyrosine 4-hydroxyphenyl transferase.